The following is a 247-amino-acid chain: Uridylate kinase (247 aa).

ATP is bound at residue 14 to 17 (KLSG). Residues 22-27 (GERGVG) form an involved in allosteric activation by GTP region. A UMP-binding site is contributed by glycine 56. Glycine 57 and arginine 61 together coordinate ATP. UMP is bound by residues aspartate 76 and 137–144 (IGSPYFST). 3 residues coordinate ATP: asparagine 165, tyrosine 171, and aspartate 174.

Belongs to the UMP kinase family. Homohexamer.

It is found in the cytoplasm. It catalyses the reaction UMP + ATP = UDP + ADP. It participates in pyrimidine metabolism; CTP biosynthesis via de novo pathway; UDP from UMP (UMPK route): step 1/1. With respect to regulation, allosterically activated by GTP. Inhibited by UTP, 5-bromo-UTP and 5-iodo-UTP. In terms of biological role, catalyzes the reversible phosphorylation of UMP to UDP, with ATP as the most efficient phosphate donor. The sequence is that of Uridylate kinase (pyrH) from Streptococcus pneumoniae serotype 4 (strain ATCC BAA-334 / TIGR4).